A 138-amino-acid polypeptide reads, in one-letter code: Large ribosomal subunit protein bL17 (138 aa).

This sequence belongs to the bacterial ribosomal protein bL17 family. In terms of assembly, part of the 50S ribosomal subunit. Contacts protein L32.

In Nitrobacter hamburgensis (strain DSM 10229 / NCIMB 13809 / X14), this protein is Large ribosomal subunit protein bL17.